Reading from the N-terminus, the 90-residue chain is Progonadoliberin-3 (90 aa).

Residues 1–23 (MDVSSKVVVQVLLLALVVQVTLC) form the signal peptide. Q24 is modified (pyrrolidone carboxylic acid). G33 is modified (glycine amide).

The protein belongs to the GnRH family. Expressed in neuron cell bodies of the nucleus olfactoretinalis.

It is found in the secreted. Stimulates the secretion of gonadotropins. The chain is Progonadoliberin-3 (gnrh3) from Oryzias latipes (Japanese rice fish).